A 736-amino-acid chain; its full sequence is 1,4-alpha-glucan branching enzyme GlgB (736 aa).

Asp415 serves as the catalytic Nucleophile. Glu470 serves as the catalytic Proton donor.

The protein belongs to the glycosyl hydrolase 13 family. GlgB subfamily. In terms of assembly, monomer.

It carries out the reaction Transfers a segment of a (1-&gt;4)-alpha-D-glucan chain to a primary hydroxy group in a similar glucan chain.. It functions in the pathway glycan biosynthesis; glycogen biosynthesis. Functionally, catalyzes the formation of the alpha-1,6-glucosidic linkages in glycogen by scission of a 1,4-alpha-linked oligosaccharide from growing alpha-1,4-glucan chains and the subsequent attachment of the oligosaccharide to the alpha-1,6 position. This is 1,4-alpha-glucan branching enzyme GlgB from Burkholderia cenocepacia (strain HI2424).